The primary structure comprises 747 residues: Sex-specific storage-protein 1 (747 aa).

Residues 1-15 (MRVLVLLACLAAASA) form the signal peptide. Residues Asn-494 and Asn-706 are each glycosylated (N-linked (GlcNAc...) asparagine).

This sequence belongs to the hemocyanin family. As to expression, fat body.

The protein localises to the secreted. It is found in the extracellular space. Larval storage protein (LSP) which may serve as a store of amino acids for synthesis of adult proteins. The sequence is that of Sex-specific storage-protein 1 (SP1) from Bombyx mori (Silk moth).